Reading from the N-terminus, the 168-residue chain is Ribosome maturation factor RimP (168 aa).

The protein belongs to the RimP family.

The protein resides in the cytoplasm. Its function is as follows. Required for maturation of 30S ribosomal subunits. This chain is Ribosome maturation factor RimP, found in Bordetella parapertussis (strain 12822 / ATCC BAA-587 / NCTC 13253).